The primary structure comprises 186 residues: dTTP/UTP pyrophosphatase (186 aa).

The Proton acceptor role is filled by Asp66.

Belongs to the Maf family. YhdE subfamily. A divalent metal cation serves as cofactor.

It localises to the cytoplasm. The enzyme catalyses dTTP + H2O = dTMP + diphosphate + H(+). It catalyses the reaction UTP + H2O = UMP + diphosphate + H(+). In terms of biological role, nucleoside triphosphate pyrophosphatase that hydrolyzes dTTP and UTP. May have a dual role in cell division arrest and in preventing the incorporation of modified nucleotides into cellular nucleic acids. In Pyrococcus horikoshii (strain ATCC 700860 / DSM 12428 / JCM 9974 / NBRC 100139 / OT-3), this protein is dTTP/UTP pyrophosphatase.